The primary structure comprises 210 residues: Somatotropin (210 aa).

An N-terminal signal peptide occupies residues Met-1–Ala-22. His-38 lines the Zn(2+) pocket. Cys-71 and Cys-183 are disulfide-bonded. Glu-192 is a Zn(2+) binding site. An intrachain disulfide couples Cys-200 to Cys-208.

It belongs to the somatotropin/prolactin family.

It localises to the secreted. In terms of biological role, growth hormone plays an important role in growth control and is involved in the regulation of several anabolic processes. Implicated as an osmoregulatory substance important for seawater adaptation. This Oncorhynchus tshawytscha (Chinook salmon) protein is Somatotropin (gh).